A 170-amino-acid chain; its full sequence is Crossover junction endodeoxyribonuclease RuvC (170 aa).

Active-site residues include D11, E71, and D143. Residues D11, E71, and D143 each coordinate Mg(2+).

Belongs to the RuvC family. In terms of assembly, homodimer which binds Holliday junction (HJ) DNA. The HJ becomes 2-fold symmetrical on binding to RuvC with unstacked arms; it has a different conformation from HJ DNA in complex with RuvA. In the full resolvosome a probable DNA-RuvA(4)-RuvB(12)-RuvC(2) complex forms which resolves the HJ. It depends on Mg(2+) as a cofactor.

Its subcellular location is the cytoplasm. It catalyses the reaction Endonucleolytic cleavage at a junction such as a reciprocal single-stranded crossover between two homologous DNA duplexes (Holliday junction).. The RuvA-RuvB-RuvC complex processes Holliday junction (HJ) DNA during genetic recombination and DNA repair. Endonuclease that resolves HJ intermediates. Cleaves cruciform DNA by making single-stranded nicks across the HJ at symmetrical positions within the homologous arms, yielding a 5'-phosphate and a 3'-hydroxyl group; requires a central core of homology in the junction. The consensus cleavage sequence is 5'-(A/T)TT(C/G)-3'. Cleavage occurs on the 3'-side of the TT dinucleotide at the point of strand exchange. HJ branch migration catalyzed by RuvA-RuvB allows RuvC to scan DNA until it finds its consensus sequence, where it cleaves and resolves the cruciform DNA. This chain is Crossover junction endodeoxyribonuclease RuvC, found in Sinorhizobium fredii (strain NBRC 101917 / NGR234).